The following is a 565-amino-acid chain: Periplasmic trehalase (565 aa).

Positions 1–30 (MKSPAPSRPQKMALIPACIFLCFAALSVQA) are cleaved as a signal peptide. Substrate-binding positions include Arg152, 159–160 (WD), Asn196, 205–207 (RSQ), 277–279 (RPE), and Gly310. Catalysis depends on proton donor/acceptor residues Asp312 and Glu496. Glu511 contributes to the substrate binding site. The segment at 538-565 (PCDNVPATRPTVKSATTQPSTKEAQPTP) is disordered. Polar residues predominate over residues 548-565 (TVKSATTQPSTKEAQPTP).

Belongs to the glycosyl hydrolase 37 family. In terms of assembly, monomer.

Its subcellular location is the periplasm. The enzyme catalyses alpha,alpha-trehalose + H2O = alpha-D-glucose + beta-D-glucose. Provides the cells with the ability to utilize trehalose at high osmolarity by splitting it into glucose molecules that can subsequently be taken up by the phosphotransferase-mediated uptake system. The protein is Periplasmic trehalase of Escherichia coli O139:H28 (strain E24377A / ETEC).